A 247-amino-acid chain; its full sequence is Neurotrophic factor BDNF precursor form (247 aa).

An N-terminal signal peptide occupies residues 1–18 (MTILFLTMVISYFGCMKA). The propeptide occupies 19–128 (APMKEASVRG…AANMSMRVRR (110 aa)). N-linked (GlcNAc...) asparagine glycosylation is present at asparagine 121. Disulfide bonds link cysteine 141–cysteine 208, cysteine 186–cysteine 237, and cysteine 196–cysteine 239.

The protein belongs to the NGF-beta family. As to quaternary structure, monomers and homodimers. Binds to NTRK2/TRKB. Can form heterodimers with other neurotrophin family members, such as NTF3 and NTF4 (in vitro), but the physiological relevance of this is not clear. BDNF precursor form: interacts with the heterodimer formed by NGFR and SORCS2. Mature BDNF has much lower affinity for the heterodimer formed by NGFR and SORCS2. N-glycosylated and glycosulfated, contrary to mature BDNF. Post-translationally, mature BDNF is produced by proteolytic removal of the propeptide, catalyzed by a FURIN family member. In addition, the precursor form is proteolytically cleaved within the propeptide, but this is not an obligatory intermediate for the production of mature BDNF. Can be converted into mature BDNF by plasmin (PLG).

The protein resides in the secreted. In terms of biological role, important signaling molecule that activates signaling cascades downstream of NTRK2. During development, promotes the survival and differentiation of selected neuronal populations of the peripheral and central nervous systems. Participates in axonal growth, pathfinding and in the modulation of dendritic growth and morphology. Major regulator of synaptic transmission and plasticity at adult synapses in many regions of the CNS. The versatility of BDNF is emphasized by its contribution to a range of adaptive neuronal responses including long-term potentiation (LTP), long-term depression (LTD), certain forms of short-term synaptic plasticity, as well as homeostatic regulation of intrinsic neuronal excitability. The chain is Neurotrophic factor BDNF precursor form (BDNF) from Canis lupus familiaris (Dog).